The primary structure comprises 334 residues: Galactosylgalactosylxylosylprotein 3-beta-glucuronosyltransferase 1 (334 aa).

The Cytoplasmic portion of the chain corresponds to 1–6 (MPKRRD). The essential for transport from endoplasmic reticulum to Golgi apparatus and interaction with SAR1A stretch occupies residues 3–5 (KRR). The helical; Signal-anchor for type II membrane protein transmembrane segment at 7–27 (ILAIVLIVLPWTLLITVWHQS) threads the bilayer. Over 28–334 (TLAPLLAVHK…KGFTDPSVEI (307 aa)) the chain is Lumenal. Residues 37–56 (KDEGSDPRRETPPGADPREY) form a disordered region. UDP-alpha-D-glucuronate is bound at residue 91-93 (PTY). 2 positions are modified to phosphothreonine: T103 and T108. Residue D122 participates in UDP-alpha-D-glucuronate binding. Residue N140 is glycosylated (N-linked (GlcNAc...) asparagine). The UDP-alpha-D-glucuronate site is built by R165 and R170. N184 is a glycosylation site (N-linked (GlcNAc...) asparagine). 195–197 (DDD) serves as a coordination point for UDP-alpha-D-glucuronate. Mn(2+) is bound at residue D197. The tract at residues 245-254 (FDPHRPFAID) is interaction with galactose moiety of substrate glycoprotein. Residue E284 is the Proton donor/acceptor of the active site. N303 carries an N-linked (GlcNAc...) asparagine glycan. 311-313 (HTR) lines the UDP-alpha-D-glucuronate pocket.

This sequence belongs to the glycosyltransferase 43 family. In terms of assembly, homodimer. Interacts with SAR1A. Mn(2+) is required as a cofactor. In terms of processing, the soluble form derives from the membrane form by proteolytic processing. As to expression, mainly expressed in the brain.

Its subcellular location is the golgi apparatus membrane. It localises to the secreted. The protein localises to the endoplasmic reticulum membrane. It carries out the reaction 3-O-(beta-D-galactosyl-(1-&gt;3)-beta-D-galactosyl-(1-&gt;4)-beta-D-xylosyl)-L-seryl-[protein] + UDP-alpha-D-glucuronate = 3-O-(beta-D-GlcA-(1-&gt;3)-beta-D-Gal-(1-&gt;3)-beta-D-Gal-(1-&gt;4)-beta-D-Xyl)-L-seryl-[protein] + UDP + H(+). The protein operates within protein modification; protein glycosylation. In terms of biological role, involved in the biosynthesis of L2/HNK-1 carbohydrate epitope on glycoproteins. Can also play a role in glycosaminoglycan biosynthesis. Substrates include asialo-orosomucoid (ASOR), asialo-fetuin, and asialo-neural cell adhesion molecule. Requires sphingomyelin for activity: stearoyl-sphingomyelin was the most effective, followed by palmitoyl-sphingomyelin and lignoceroyl-sphingomyelin. Activity was demonstrated only for sphingomyelin with a saturated fatty acid and not for that with an unsaturated fatty acid, regardless of the length of the acyl group. In Homo sapiens (Human), this protein is Galactosylgalactosylxylosylprotein 3-beta-glucuronosyltransferase 1.